We begin with the raw amino-acid sequence, 857 residues long: Trehalose transporter 1 (857 aa).

2 disordered regions span residues 1–28 (MSGR…KLKE) and 62–202 (DPFL…QKAT). The Cytoplasmic portion of the chain corresponds to 1 to 392 (MSGRDNRGAG…VYRPTTNPIY (392 aa)). A9 carries the phosphothreonine modification. The residue at position 12 (G12) is a Phosphoserine. Residues 69–81 (VSPQRHPQNTVRT) are compositionally biased toward polar residues. Residues 134 to 143 (EIREHRDRQQ) are compositionally biased toward basic and acidic residues. Polar residues predominate over residues 171–181 (GNSNTNSNKAA). S248, S249, and S250 each carry phosphoserine. Disordered stretches follow at residues 249–269 (SSEE…HQSL) and 280–299 (VLQG…EHKR). A phosphoserine mark is found at S320 and S322. The disordered stretch occupies residues 327–346 (LTSRQHFQQQRSISTDSRKS). Over residues 330 to 341 (RQHFQQQRSIST) the composition is skewed to polar residues. A helical transmembrane segment spans residues 393–413 (IWTQVLAALSVSLGSLVVGFV). At 414 to 440 (SAYTSPALVSMTDRNITSFEVTQDAGS) the chain is on the extracellular side. N-linked (GlcNAc...) asparagine glycosylation is present at N428. Residues 441-461 (WVGGIMPLAGLAGGIAGGPLI) traverse the membrane as a helical segment. Over 462 to 473 (EYLGRRNTILAT) the chain is Cytoplasmic. A helical transmembrane segment spans residues 474–494 (AVPFIVSSLLIACAVNVAMVL). The Extracellular segment spans residues 495–497 (CGR). Residues 498–518 (FLAGFCVGIASLSLPVYLGET) traverse the membrane as a helical segment. The Cytoplasmic portion of the chain corresponds to 519-528 (VQPEVRGTLG). A helical transmembrane segment spans residues 529–549 (LLPTAFGNIGILLCFVAGSFM). N550 carries an N-linked (GlcNAc...) asparagine glycan. The Extracellular segment spans residues 550–552 (NWS). The helical transmembrane segment at 553–573 (MLAFLGAALPVPFLILMFLIP) threads the bilayer. The Cytoplasmic portion of the chain corresponds to 574-636 (ETPRWFVGRG…ELLKLNNLKP (63 aa)). The chain crosses the membrane as a helical span at residues 637-657 (LSISLGLMFFQQFSGINAVIF). The Extracellular segment spans residues 658 to 673 (YTVQIFKDAGSTIDGN). The chain crosses the membrane as a helical span at residues 674 to 694 (LCTIIVGIVNFLATFIGIVLI). Over 695-700 (DRAGRK) the chain is Cytoplasmic. The helical transmembrane segment at 701-721 (ILLYVSDIAMVLTLFVLGGFF) threads the bilayer. At 722-740 (YCKTYGPDVSHLGWLPLTC) the chain is on the extracellular side. The chain crosses the membrane as a helical span at residues 741 to 761 (FVIYILGFSLGFGPIPWLMMG). Over 762-767 (EILPAK) the chain is Cytoplasmic. The helical transmembrane segment at 768–788 (IRGSAASVATAFNWFCTFVVT) threads the bilayer. The Extracellular segment spans residues 789–801 (KTFQDLTVAMGAH). The chain crosses the membrane as a helical span at residues 802 to 822 (GAFWLFGAICFVGLFFVIIYV). Over 823–857 (PETQGKTLEDIERKMMGRVRRMSSVANIKPLSFNM) the chain is Cytoplasmic. Phosphoserine occurs at positions 845 and 846.

It belongs to the major facilitator superfamily. Sugar transporter (TC 2.A.1.1) family. Trehalose transporter subfamily. In terms of tissue distribution, expressed in perineurial glia of the outer layer of the nervous system that forms the blood brain barrier (at protein level). Expressed in the fat body (at protein level). May be specifically expressed in perineurial glia (at protein level). As to expression, may be specifically expressed in the fat body (at protein level).

The protein localises to the cell membrane. It localises to the vesicle. It carries out the reaction alpha,alpha-trehalose(in) = alpha,alpha-trehalose(out). It catalyses the reaction D-glucose(out) = D-glucose(in). Its function is as follows. Low-capacity facilitative transporter for trehalose. Can also transport glucose. Does not transport maltose, sucrose, lactose or fructose. Mediates the bidirectional transfer of trehalose. Responsible for the transport of trehalose synthesized in the fat body and the incorporation of trehalose into other tissues that require a carbon source, thereby regulating trehalose levels in the hemolymph. Required in glial cells of the blood brain barrier to fuel glycolysis but not required in neurons. Neurons rely on the citric acid cycle for their energy needs and utilise alanine and lactate, by-products of glial cell glycolysis released into the hemolymph, as fuel. Increased expression in glial cells of the blood brain barrier during starvation and increased cell surface localization enhances carbohydrate uptake to protect the central nervous system from restricted nutrient availability. The sequence is that of Trehalose transporter 1 from Drosophila melanogaster (Fruit fly).